The primary structure comprises 385 residues: Phospho-N-acetylmuramoyl-pentapeptide-transferase (385 aa).

A run of 10 helical transmembrane segments spans residues 23–43 (FITV…LGAG), 79–99 (MGGI…GAVA), 103–123 (VWLS…DDYV), 135–155 (AWYK…VLYF), 186–206 (LGVD…VTAV), 218–238 (GLTT…VYVS), 258–278 (LTVF…YNGY), 282–302 (VFMG…TILM), 307–327 (LLLP…IVQT), and 362–382 (KIVT…LLIL).

This sequence belongs to the glycosyltransferase 4 family. MraY subfamily. It depends on Mg(2+) as a cofactor.

The protein resides in the cell inner membrane. The enzyme catalyses UDP-N-acetyl-alpha-D-muramoyl-L-alanyl-gamma-D-glutamyl-meso-2,6-diaminopimeloyl-D-alanyl-D-alanine + di-trans,octa-cis-undecaprenyl phosphate = di-trans,octa-cis-undecaprenyl diphospho-N-acetyl-alpha-D-muramoyl-L-alanyl-D-glutamyl-meso-2,6-diaminopimeloyl-D-alanyl-D-alanine + UMP. It participates in cell wall biogenesis; peptidoglycan biosynthesis. Functionally, catalyzes the initial step of the lipid cycle reactions in the biosynthesis of the cell wall peptidoglycan: transfers peptidoglycan precursor phospho-MurNAc-pentapeptide from UDP-MurNAc-pentapeptide onto the lipid carrier undecaprenyl phosphate, yielding undecaprenyl-pyrophosphoryl-MurNAc-pentapeptide, known as lipid I. The chain is Phospho-N-acetylmuramoyl-pentapeptide-transferase from Salinibacter ruber (strain DSM 13855 / M31).